The primary structure comprises 162 residues: Solute carrier family 2, facilitated glucose transporter member 4 (162 aa).

At 1-13 (TSIFETAGVGQPA) the chain is on the extracellular side. Residues 14–34 (YATIGAGVVNTVFTLVSVFLV) traverse the membrane as a helical segment. Asparagine 23 is a binding site for D-glucose. At 35 to 43 (ERAGRRTLH) the chain is on the cytoplasmic side. A helical transmembrane segment spans residues 44 to 64 (LLGLAGMCGCAILMTIALLLL). The Extracellular portion of the chain corresponds to 65-75 (ERLPAMSYVSI). Residues 76–96 (VAIFGFVAFFEIGPGPIPWFI) form a helical membrane-spanning segment. D-glucose-binding residues include glutamate 86 and tryptophan 94. At 97–107 (VAELFSQGPRP) the chain is on the cytoplasmic side. The helical transmembrane segment at 108–128 (AAMAVAGFCNWTSNFIIGMGF) threads the bilayer. At 129–135 (QYIAXAM) the chain is on the extracellular side. Residues 136–156 (GPYVFLLFAVLLLAFFIFTFL) form a helical membrane-spanning segment. The Cytoplasmic segment spans residues 157-162 (KVPETR).

The protein belongs to the major facilitator superfamily. Sugar transporter (TC 2.A.1.1) family. Glucose transporter subfamily. As to quaternary structure, binds to DAXX. Interacts via its N-terminus with SRFBP1. Interacts with NDUFA9. Interacts with TRARG1; the interaction is required for proper SLC2A4 recycling after insulin stimulation. Post-translationally, sumoylated. Palmitoylated. Palmitoylation by ZDHHC7 controls the insulin-dependent translocation of GLUT4 to the plasma membrane.

It is found in the cell membrane. The protein localises to the endomembrane system. The protein resides in the cytoplasm. Its subcellular location is the perinuclear region. It carries out the reaction D-glucose(out) = D-glucose(in). In terms of biological role, insulin-regulated facilitative glucose transporter, which plays a key role in removal of glucose from circulation. Response to insulin is regulated by its intracellular localization: in the absence of insulin, it is efficiently retained intracellularly within storage compartments in muscle and fat cells. Upon insulin stimulation, translocates from these compartments to the cell surface where it transports glucose from the extracellular milieu into the cell. This Canis lupus familiaris (Dog) protein is Solute carrier family 2, facilitated glucose transporter member 4.